The primary structure comprises 269 residues: HTH-type transcriptional regulator Rv0792c (269 aa).

The region spanning Val20–Pro88 is the HTH gntR-type domain. A DNA-binding region (H-T-H motif) is located at residues Glu48–Gly67.

As to quaternary structure, homodimer.

With respect to regulation, DNA-binding activity is increased in the presence of L-arabinose and inhibited by the small molecule I-OMe-Tyrphostin. Its function is as follows. Transcriptional regulator required for survival in oxidative stress and for establishing infection in host tissues. Regulates the expression of a subset of genes involved in oxidative stress adaptation and virulence, enabling the bacteria to adapt and persist in host tissues. This chain is HTH-type transcriptional regulator Rv0792c, found in Mycobacterium tuberculosis (strain ATCC 25618 / H37Rv).